The sequence spans 467 residues: Minor capsid protein L2 (467 aa).

The short motif at 1-12 is the Nuclear localization signal element; sequence MVAVRASRRKRA. Cys21 and Cys27 are disulfide-bonded. A Nuclear localization signal motif is present at residues 447 to 456; the sequence is LIHKRRRKRV.

Belongs to the papillomaviridae L2 protein family. Interacts with major capsid protein L1. Interacts with E2; this interaction inhibits E2 transcriptional activity but not the DNA replication function E2. Interacts with host GADD45GIP1. Interacts with host HSPA8; this interaction is required for L2 nuclear translocation. Interacts with host importins KPNB2 and KPNB3. Forms a complex with importin alpha2-beta1 heterodimers via interaction with the importin alpha2 adapter. Interacts with host DYNLT1; this interaction is essential for virus intracellular transport during entry. Interacts (via C-terminus) with host retromer subunits VPS35 and VPS29. Post-translationally, highly phosphorylated.

The protein localises to the virion. The protein resides in the host nucleus. It is found in the host early endosome. Its subcellular location is the host Golgi apparatus. Functionally, minor protein of the capsid that localizes along the inner surface of the virion, within the central cavities beneath the L1 pentamers. Plays a role in capsid stabilization through interaction with the major capsid protein L1. Once the virion enters the host cell, L2 escorts the genomic DNA into the nucleus by promoting escape from the endosomal compartments and traffic through the host Golgi network. Mechanistically, the C-terminus of L2 possesses a cell-penetrating peptide that protudes from the host endosome, interacts with host cytoplasmic retromer cargo and thereby mediates the capsid delivery to the host trans-Golgi network. Plays a role through its interaction with host dynein in the intracellular microtubule-dependent transport of viral capsid toward the nucleus. Mediates the viral genome import into the nucleus through binding to host importins. Once within the nucleus, L2 localizes viral genomes to host PML bodies in order to activate early gene expression for establishment of infection. Later on, promotes late gene expression by interacting with the viral E2 protein and by inhibiting its transcriptional activation functions. During virion assembly, encapsidates the genome by direct interaction with the viral DNA. In Human papillomavirus 69, this protein is Minor capsid protein L2.